The primary structure comprises 119 residues: Neuropeptide B (119 aa).

Positions Met1–Ala21 are cleaved as a signal peptide. A propeptide spanning residues Ser53 to Ala119 is cleaved from the precursor.

This sequence belongs to the neuropeptide B/W family. Detected in a variety of tissues. High levels are found in the lymphoid organs, central nervous system, mammary gland and uterus.

The protein localises to the secreted. Its function is as follows. May be involved in the regulation of feeding, neuroendocrine system, memory and learning. May be involved in the afferent pain pathway. The sequence is that of Neuropeptide B (Npb) from Rattus norvegicus (Rat).